A 384-amino-acid chain; its full sequence is ATP phosphoribosyltransferase regulatory subunit (384 aa).

The protein belongs to the class-II aminoacyl-tRNA synthetase family. HisZ subfamily. Heteromultimer composed of HisG and HisZ subunits.

Its subcellular location is the cytoplasm. It functions in the pathway amino-acid biosynthesis; L-histidine biosynthesis; L-histidine from 5-phospho-alpha-D-ribose 1-diphosphate: step 1/9. In terms of biological role, required for the first step of histidine biosynthesis. May allow the feedback regulation of ATP phosphoribosyltransferase activity by histidine. This chain is ATP phosphoribosyltransferase regulatory subunit, found in Rhodospirillum rubrum (strain ATCC 11170 / ATH 1.1.1 / DSM 467 / LMG 4362 / NCIMB 8255 / S1).